The following is a 147-amino-acid chain: 3-dehydroquinate dehydratase (147 aa).

The active-site Proton acceptor is Y25. Substrate contacts are provided by N76, H82, and D89. H102 serves as the catalytic Proton donor. Residues 103–104 and R113 contribute to the substrate site; that span reads IS.

Belongs to the type-II 3-dehydroquinase family. In terms of assembly, homododecamer.

The catalysed reaction is 3-dehydroquinate = 3-dehydroshikimate + H2O. It functions in the pathway metabolic intermediate biosynthesis; chorismate biosynthesis; chorismate from D-erythrose 4-phosphate and phosphoenolpyruvate: step 3/7. Functionally, catalyzes a trans-dehydration via an enolate intermediate. The polypeptide is 3-dehydroquinate dehydratase (Mycobacterium tuberculosis (strain ATCC 25177 / H37Ra)).